The chain runs to 221 residues: ATP-dependent Clp protease proteolytic subunit 3 (221 aa).

Ser118 serves as the catalytic Nucleophile. The active site involves His143.

It belongs to the peptidase S14 family. Fourteen ClpP subunits assemble into 2 heptameric rings which stack back to back to give a disk-like structure with a central cavity, resembling the structure of eukaryotic proteasomes.

It localises to the cytoplasm. It catalyses the reaction Hydrolysis of proteins to small peptides in the presence of ATP and magnesium. alpha-casein is the usual test substrate. In the absence of ATP, only oligopeptides shorter than five residues are hydrolyzed (such as succinyl-Leu-Tyr-|-NHMec, and Leu-Tyr-Leu-|-Tyr-Trp, in which cleavage of the -Tyr-|-Leu- and -Tyr-|-Trp bonds also occurs).. In terms of biological role, cleaves peptides in various proteins in a process that requires ATP hydrolysis. Has a chymotrypsin-like activity. Plays a major role in the degradation of misfolded proteins. The sequence is that of ATP-dependent Clp protease proteolytic subunit 3 from Nocardia farcinica (strain IFM 10152).